Here is a 548-residue protein sequence, read N- to C-terminus: CTP synthase (548 aa).

Residues 1 to 270 (MNRRSCAFIF…DTKISALLGC (270 aa)) are amidoligase domain. Residue S17 participates in CTP binding. S17 contacts UTP. ATP-binding positions include 18–23 (SIGKGL) and D75. The Mg(2+) site is built by D75 and E143. CTP is bound by residues 150 to 152 (DIE), 190 to 195 (KTKPSQ), and K227. UTP contacts are provided by residues 190–195 (KTKPSQ) and K227. The region spanning 305-548 (YSGLCDAYIS…VRAGLLRKYS (244 aa)) is the Glutamine amidotransferase type-1 domain. An L-glutamine-binding site is contributed by G356. The Nucleophile; for glutamine hydrolysis role is filled by C383. L-glutamine contacts are provided by residues 384–387 (FGFQ), E407, and R475. Catalysis depends on residues H521 and E523.

It belongs to the CTP synthase family. Homotetramer.

It carries out the reaction UTP + L-glutamine + ATP + H2O = CTP + L-glutamate + ADP + phosphate + 2 H(+). The enzyme catalyses L-glutamine + H2O = L-glutamate + NH4(+). It catalyses the reaction UTP + NH4(+) + ATP = CTP + ADP + phosphate + 2 H(+). It functions in the pathway pyrimidine metabolism; CTP biosynthesis via de novo pathway; CTP from UDP: step 2/2. With respect to regulation, allosterically activated by GTP, when glutamine is the substrate; GTP has no effect on the reaction when ammonia is the substrate. The allosteric effector GTP functions by stabilizing the protein conformation that binds the tetrahedral intermediate(s) formed during glutamine hydrolysis. Inhibited by the product CTP, via allosteric rather than competitive inhibition. In terms of biological role, catalyzes the ATP-dependent amination of UTP to CTP with either L-glutamine or ammonia as the source of nitrogen. Regulates intracellular CTP levels through interactions with the four ribonucleotide triphosphates. The sequence is that of CTP synthase from Neorickettsia sennetsu (strain ATCC VR-367 / Miyayama) (Ehrlichia sennetsu).